A 422-amino-acid chain; its full sequence is Serine hydroxymethyltransferase (422 aa).

(6S)-5,6,7,8-tetrahydrofolate-binding positions include Leu-118 and 122–124; that span reads GHL. An N6-(pyridoxal phosphate)lysine modification is found at Lys-227. (6S)-5,6,7,8-tetrahydrofolate contacts are provided by residues Glu-243 and 351–353; that span reads SPF.

It belongs to the SHMT family. As to quaternary structure, homodimer. Requires pyridoxal 5'-phosphate as cofactor.

The protein resides in the cytoplasm. The enzyme catalyses (6R)-5,10-methylene-5,6,7,8-tetrahydrofolate + glycine + H2O = (6S)-5,6,7,8-tetrahydrofolate + L-serine. It participates in one-carbon metabolism; tetrahydrofolate interconversion. Its pathway is amino-acid biosynthesis; glycine biosynthesis; glycine from L-serine: step 1/1. Functionally, catalyzes the reversible interconversion of serine and glycine with tetrahydrofolate (THF) serving as the one-carbon carrier. This reaction serves as the major source of one-carbon groups required for the biosynthesis of purines, thymidylate, methionine, and other important biomolecules. Also exhibits THF-independent aldolase activity toward beta-hydroxyamino acids, producing glycine and aldehydes, via a retro-aldol mechanism. In Kosmotoga olearia (strain ATCC BAA-1733 / DSM 21960 / TBF 19.5.1), this protein is Serine hydroxymethyltransferase.